A 348-amino-acid polypeptide reads, in one-letter code: Dihydroorotate dehydrogenase (quinone) (348 aa).

Residues 65-69 (AGMDK) and T89 contribute to the FMN site. K69 serves as a coordination point for substrate. 114 to 118 (NRMGF) contributes to the substrate binding site. FMN contacts are provided by N143 and N176. N176 provides a ligand contact to substrate. The active-site Nucleophile is S179. Substrate is bound at residue N181. K221 and T249 together coordinate FMN. Position 250-251 (250-251 (NT)) interacts with substrate. Residues G272, G301, and 322-323 (YT) each bind FMN.

The protein belongs to the dihydroorotate dehydrogenase family. Type 2 subfamily. Monomer. FMN serves as cofactor.

Its subcellular location is the cell membrane. It catalyses the reaction (S)-dihydroorotate + a quinone = orotate + a quinol. It functions in the pathway pyrimidine metabolism; UMP biosynthesis via de novo pathway; orotate from (S)-dihydroorotate (quinone route): step 1/1. Its function is as follows. Catalyzes the conversion of dihydroorotate to orotate with quinone as electron acceptor. This chain is Dihydroorotate dehydrogenase (quinone), found in Akkermansia muciniphila (strain ATCC BAA-835 / DSM 22959 / JCM 33894 / BCRC 81048 / CCUG 64013 / CIP 107961 / Muc).